A 209-amino-acid polypeptide reads, in one-letter code: Phosphoheptose isomerase (209 aa).

Residues 50 to 209 (IADTFREGGK…ELVEKMMGYD (160 aa)) enclose the SIS domain. Residue 65–67 (NGG) participates in substrate binding. 2 residues coordinate Zn(2+): histidine 74 and glutamate 78. Residues glutamate 78, 109–110 (ND), 135–137 (STS), serine 140, and glutamine 188 each bind substrate. Residues glutamine 188 and histidine 196 each coordinate Zn(2+).

The protein belongs to the SIS family. GmhA subfamily. The cofactor is Zn(2+).

It is found in the cytoplasm. It catalyses the reaction 2 D-sedoheptulose 7-phosphate = D-glycero-alpha-D-manno-heptose 7-phosphate + D-glycero-beta-D-manno-heptose 7-phosphate. The protein operates within carbohydrate biosynthesis; D-glycero-D-manno-heptose 7-phosphate biosynthesis; D-glycero-alpha-D-manno-heptose 7-phosphate and D-glycero-beta-D-manno-heptose 7-phosphate from sedoheptulose 7-phosphate: step 1/1. Catalyzes the isomerization of sedoheptulose 7-phosphate in D-glycero-D-manno-heptose 7-phosphate. In Chlorobaculum tepidum (strain ATCC 49652 / DSM 12025 / NBRC 103806 / TLS) (Chlorobium tepidum), this protein is Phosphoheptose isomerase.